A 458-amino-acid chain; its full sequence is BTB/POZ domain-containing protein At5g41330 (458 aa).

The BTB domain maps to 11-72 (NVVSINVGGR…LRTGNLPARS (62 aa)). WD repeat units follow at residues 259–305 (DSAI…MVWE), 360–399 (LNERRGVGSKIESYGNHVFCSSKGSGIELWSEVITGLVGN), and 421–458 (SGENKITGLAFGGNRMFVTRKDQQSVQVWQSPSRGISI).

It functions in the pathway protein modification; protein ubiquitination. In terms of biological role, may act as a substrate-specific adapter of an E3 ubiquitin-protein ligase complex (CUL3-RBX1-BTB) which mediates the ubiquitination and subsequent proteasomal degradation of target proteins. This is BTB/POZ domain-containing protein At5g41330 from Arabidopsis thaliana (Mouse-ear cress).